We begin with the raw amino-acid sequence, 923 residues long: MLGFAKKLFGSSNERKVKTLATRVAKINAYEAEYAALSDEALKGKTAEFKARLEKGETLDDILNEAFAVVREASKRVLGMRHFDVQMVGGMVLHFSGISEMRTGEGKTLVATLPTYLNALEGKGVHVITVNDYLARRDADWMGQVYNFLGLSYGVIVNGLSQGERQRAYRSDITYGTNNEFGFDYLRDNLVYSVDEMVQRGHNFAIVDEVDSILIDEARTPLIISGPTEDRSSFYKTIDVLVKELILDKSMFDHDEKQKQVILTEDGQEKIEEILMSGGHLAEDSAGLYDAANVSVVHHVNQALRANILYTRDKDYIVKGGEVVLIDEFTGRMMTGRRLSEGLHQAIEAKEGADIQPENQTLASVTIQNYFRLYKKLSGMTGTASTEAQEFDDIYKMSVSEIPTNRTIQRIDDDDEVYRTEREKNEAILKQIADCHVRGQPILVGTVSIEKSEELSKLLSTFSFEKDGKKVKGIPHQVLNARFHEQEAVIVADAGVPGAVTIATNMAGRGTDIQLGGSIDMRLFNWRQQQRGMGLEITVEDEAEERARLETEIADKKAQALAAGGLFVLGTERHESRRIDNQLRGRTGRQGDPGRSKFFLSCEDDLLRIFAGERLDAIMRTFGVQEGEAITHKWLNNAIATAQKRVEQRNYEIRKNLLKYDDVVNDQRKAVFEQRQEFMESSDLSDIIHEMRRDVIDDLVLRHLPPKAYAEQWDVEGLTERVKSILGLDLPIAEWAAEEGIADEEMKERITKAADEYAAQREVIITPEQMRSVEKSFLLQMIDLQWREHLMHLDHLRNVIGLRGYGQRDPLNEYKTEAFSLFEKLLGDLRTNTTRWLMTVEIAYAEPEVPHTPLDNLVEVHLDPLTGENAAFAGGIPEGLSTAQREALPVSALPEGWDRTNRNAPCPCGSGKKFKQCHGSLVR.

Residues Gln-86, 104 to 108, and Asp-512 each bind ATP; that span reads GEGKT. 4 residues coordinate Zn(2+): Cys-906, Cys-908, Cys-917, and His-918.

Belongs to the SecA family. In terms of assembly, monomer and homodimer. Part of the essential Sec protein translocation apparatus which comprises SecA, SecYEG and auxiliary proteins SecDF-YajC and YidC. Requires Zn(2+) as cofactor.

The protein localises to the cell inner membrane. The protein resides in the cytoplasm. The catalysed reaction is ATP + H2O + cellular proteinSide 1 = ADP + phosphate + cellular proteinSide 2.. Its function is as follows. Part of the Sec protein translocase complex. Interacts with the SecYEG preprotein conducting channel. Has a central role in coupling the hydrolysis of ATP to the transfer of proteins into and across the cell membrane, serving both as a receptor for the preprotein-SecB complex and as an ATP-driven molecular motor driving the stepwise translocation of polypeptide chains across the membrane. This chain is Protein translocase subunit SecA, found in Caulobacter vibrioides (strain ATCC 19089 / CIP 103742 / CB 15) (Caulobacter crescentus).